Consider the following 171-residue polypeptide: Dual specificity protein phosphatase OPG106 (171 aa).

A dimerization region spans residues 1–27 (MDKKSLYKYLLLRSTGDMHKAKSPTIM). The 149-residue stretch at 23-171 (SPTIMTRVTN…IIEKYVIDKN (149 aa)) folds into the Tyrosine-protein phosphatase domain. Residue Cys-110 is the Phosphocysteine intermediate of the active site.

The protein belongs to the protein-tyrosine phosphatase family. Non-receptor class dual specificity subfamily. As to quaternary structure, homodimer.

Its subcellular location is the virion. It is found in the host cytoplasm. It carries out the reaction O-phospho-L-tyrosyl-[protein] + H2O = L-tyrosyl-[protein] + phosphate. The catalysed reaction is O-phospho-L-seryl-[protein] + H2O = L-seryl-[protein] + phosphate. Its function is as follows. Serine/tyrosine phosphatase which down-regulates cellular antiviral response by dephosphorylating activated host STAT1 and blocking interferon (IFN)-stimulated innate immune responses. Dephosphorylates the OPG144 protein. This Bos taurus (Bovine) protein is Dual specificity protein phosphatase OPG106 (OPG106).